Reading from the N-terminus, the 115-residue chain is Phosphorelay protein LuxU (115 aa).

Residues 17–107 enclose the HPt domain; it reads GADNVPVLLE…DRLHQTQQAY (91 aa). H56 is subject to Phosphohistidine.

As to quaternary structure, monomer.

Its function is as follows. Phosphorelay protein which receives a sensory signal from a sensor kinase and transmit it to LuxO. At low cell density, a phosphoryl group is transferred from the sensor kinase, probably on His-56 and this phosphoryl group is further transferred to LuxO. This chain is Phosphorelay protein LuxU (luxU), found in Vibrio vulnificus (strain CMCP6).